The sequence spans 439 residues: Glutamate--tRNA ligase 2 (439 aa).

The 'HIGH' region signature appears at 6–16 (PSPTGDMHIGN). A 'KMSKS' region motif is present at residues 232-236 (KMSKR). ATP is bound at residue Lys235.

Belongs to the class-I aminoacyl-tRNA synthetase family. Glutamate--tRNA ligase type 1 subfamily. Monomer.

The protein localises to the cytoplasm. It carries out the reaction tRNA(Glu) + L-glutamate + ATP = L-glutamyl-tRNA(Glu) + AMP + diphosphate. Catalyzes the attachment of glutamate to tRNA(Glu) in a two-step reaction: glutamate is first activated by ATP to form Glu-AMP and then transferred to the acceptor end of tRNA(Glu). The chain is Glutamate--tRNA ligase 2 from Helicobacter pylori (strain HPAG1).